Consider the following 424-residue polypeptide: Tol-Pal system protein TolB (424 aa).

The first 20 residues, 1–20 (MKQFIVFILSLYTTLSWAVL), serve as a signal peptide directing secretion.

The protein belongs to the TolB family. The Tol-Pal system is composed of five core proteins: the inner membrane proteins TolA, TolQ and TolR, the periplasmic protein TolB and the outer membrane protein Pal. They form a network linking the inner and outer membranes and the peptidoglycan layer.

It is found in the periplasm. Part of the Tol-Pal system, which plays a role in outer membrane invagination during cell division and is important for maintaining outer membrane integrity. This chain is Tol-Pal system protein TolB, found in Vesicomyosocius okutanii subsp. Calyptogena okutanii (strain HA).